The sequence spans 512 residues: Hyaluronidase PH-20 (512 aa).

The first 35 residues, 1-35 (MGELRFKHLFWGSFVESGGTFQTVLIFLLIPCSLT), serve as a signal peptide directing secretion. The N-linked (GlcNAc...) asparagine glycan is linked to N46. Intrachain disulfides connect C60–C351 and C223–C237. Residue E147 is the Proton donor of the active site. A glycan (N-linked (GlcNAc...) asparagine) is linked at N165. Residues N293 and N368 are each glycosylated (N-linked (GlcNAc...) asparagine). 3 disulfides stabilise this stretch: C376-C387, C381-C435, and C437-C464.

The protein belongs to the glycosyl hydrolase 56 family.

The protein resides in the cell membrane. It carries out the reaction Random hydrolysis of (1-&gt;4)-linkages between N-acetyl-beta-D-glucosamine and D-glucuronate residues in hyaluronate.. Involved in sperm-egg adhesion. Upon fertilization sperm must first penetrate a layer of cumulus cells that surrounds the egg before reaching the zona pellucida. The cumulus cells are embedded in a matrix containing hyaluronic acid which is formed prior to ovulation. This protein aids in penetrating the layer of cumulus cells by digesting hyaluronic acid. The chain is Hyaluronidase PH-20 (Spam1) from Mus musculus (Mouse).